Consider the following 209-residue polypeptide: Pyridoxine/pyridoxamine 5'-phosphate oxidase (209 aa).

Substrate-binding positions include 2-5 (RVEY) and Lys-66. FMN is bound by residues 61–66 (RTVLCK), 76–77 (FT), Lys-83, and Gln-105. 3 residues coordinate substrate: Tyr-123, Arg-127, and Ser-131. FMN contacts are provided by residues 140–141 (QS) and Trp-186. Substrate is bound at residue 192-194 (RVH). FMN is bound at residue Arg-196.

This sequence belongs to the pyridoxamine 5'-phosphate oxidase family. Homodimer. FMN serves as cofactor.

It carries out the reaction pyridoxamine 5'-phosphate + O2 + H2O = pyridoxal 5'-phosphate + H2O2 + NH4(+). The catalysed reaction is pyridoxine 5'-phosphate + O2 = pyridoxal 5'-phosphate + H2O2. The protein operates within cofactor metabolism; pyridoxal 5'-phosphate salvage; pyridoxal 5'-phosphate from pyridoxamine 5'-phosphate: step 1/1. Its pathway is cofactor metabolism; pyridoxal 5'-phosphate salvage; pyridoxal 5'-phosphate from pyridoxine 5'-phosphate: step 1/1. In terms of biological role, catalyzes the oxidation of either pyridoxine 5'-phosphate (PNP) or pyridoxamine 5'-phosphate (PMP) into pyridoxal 5'-phosphate (PLP). This chain is Pyridoxine/pyridoxamine 5'-phosphate oxidase, found in Mycobacterium sp. (strain JLS).